The sequence spans 1216 residues: DNA-directed RNA polymerase subunit beta (1216 aa).

The segment at 1185 to 1216 (EEKQELPSQEYESLNLDQELKTASENVSESEF) is disordered. Positions 1190–1216 (LPSQEYESLNLDQELKTASENVSESEF) are enriched in polar residues.

This sequence belongs to the RNA polymerase beta chain family. The RNAP catalytic core consists of 2 alpha, 1 beta, 1 beta' and 1 omega subunit. When a sigma factor is associated with the core the holoenzyme is formed, which can initiate transcription.

It catalyses the reaction RNA(n) + a ribonucleoside 5'-triphosphate = RNA(n+1) + diphosphate. In terms of biological role, DNA-dependent RNA polymerase catalyzes the transcription of DNA into RNA using the four ribonucleoside triphosphates as substrates. The sequence is that of DNA-directed RNA polymerase subunit beta from Mycoplasmopsis pulmonis (strain UAB CTIP) (Mycoplasma pulmonis).